A 439-amino-acid polypeptide reads, in one-letter code: Potassium/proton antiporter CemA (439 aa).

Helical transmembrane passes span Ile-55–Leu-75, Ile-79–Asn-99, Tyr-220–Leu-240, Leu-317–Gly-337, Ile-364–Ile-384, and Ile-399–Ile-419.

This sequence belongs to the CemA family.

The protein localises to the plastid. It is found in the chloroplast inner membrane. It catalyses the reaction K(+)(in) + H(+)(out) = K(+)(out) + H(+)(in). Its function is as follows. Contributes to K(+)/H(+) antiport activity by supporting proton efflux to control proton extrusion and homeostasis in chloroplasts in a light-dependent manner to modulate photosynthesis. Prevents excessive induction of non-photochemical quenching (NPQ) under continuous-light conditions. Indirectly promotes efficient inorganic carbon uptake into chloroplasts. This is Potassium/proton antiporter CemA from Physcomitrium patens (Spreading-leaved earth moss).